A 255-amino-acid polypeptide reads, in one-letter code: Acetylglutamate kinase (255 aa).

Residues Gly40 to Gly41, Arg62, and Asn153 each bind substrate.

The protein belongs to the acetylglutamate kinase family. ArgB subfamily.

It is found in the cytoplasm. The catalysed reaction is N-acetyl-L-glutamate + ATP = N-acetyl-L-glutamyl 5-phosphate + ADP. The protein operates within amino-acid biosynthesis; L-arginine biosynthesis; N(2)-acetyl-L-ornithine from L-glutamate: step 2/4. In terms of biological role, catalyzes the ATP-dependent phosphorylation of N-acetyl-L-glutamate. In Bacillus mycoides (strain KBAB4) (Bacillus weihenstephanensis), this protein is Acetylglutamate kinase.